Reading from the N-terminus, the 290-residue chain is MFQGSIVAIVTPFKNGAVDEEKLRELVEFQIENGTDAIVPCGTTGESSTLSYVEHDRVIQVVVEQVNKRVPVIAGTGSNSTHEAIEITQHAKELGADGALLVTPYYNKPSQEGLFRHYKAVADAVALPQILYNVPGRTGVNLLPETVARLSVHQNIVAIKEATGSLQQASEVLALCGDKIDVLSGDDFITLPIMAAGGKGVISVTANIMPKEVSSLVDAFNAGNMEEARRLHLYLLKISNAMFIESNPVPVKAAVSLMGKCSSEVRLPLAPLMEANLAKLTAIMKEYKLI.

Pyruvate is bound at residue threonine 44. Tyrosine 132 (proton donor/acceptor) is an active-site residue. Lysine 160 functions as the Schiff-base intermediate with substrate in the catalytic mechanism. Isoleucine 202 is a binding site for pyruvate.

It belongs to the DapA family. As to quaternary structure, homotetramer; dimer of dimers.

It localises to the cytoplasm. It catalyses the reaction L-aspartate 4-semialdehyde + pyruvate = (2S,4S)-4-hydroxy-2,3,4,5-tetrahydrodipicolinate + H2O + H(+). Its pathway is amino-acid biosynthesis; L-lysine biosynthesis via DAP pathway; (S)-tetrahydrodipicolinate from L-aspartate: step 3/4. In terms of biological role, catalyzes the condensation of (S)-aspartate-beta-semialdehyde [(S)-ASA] and pyruvate to 4-hydroxy-tetrahydrodipicolinate (HTPA). This is 4-hydroxy-tetrahydrodipicolinate synthase from Citrifermentans bemidjiense (strain ATCC BAA-1014 / DSM 16622 / JCM 12645 / Bem) (Geobacter bemidjiensis).